A 435-amino-acid chain; its full sequence is Chaperone SurA (435 aa).

The N-terminal stretch at 1-24 (MRLRSFAFLGFMLLVAMAPSMASA) is a signal peptide. 2 PpiC domains span residues 173 to 274 (DTAY…KLID) and 286 to 385 (VTEN…ELED).

It localises to the periplasm. The enzyme catalyses [protein]-peptidylproline (omega=180) = [protein]-peptidylproline (omega=0). In terms of biological role, chaperone involved in the correct folding and assembly of outer membrane proteins. Recognizes specific patterns of aromatic residues and the orientation of their side chains, which are found more frequently in integral outer membrane proteins. May act in both early periplasmic and late outer membrane-associated steps of protein maturation. The protein is Chaperone SurA of Chromohalobacter salexigens (strain ATCC BAA-138 / DSM 3043 / CIP 106854 / NCIMB 13768 / 1H11).